A 468-amino-acid chain; its full sequence is ATP synthase subunit beta (468 aa).

Position 148-155 (148-155 (GGAGVGKT)) interacts with ATP.

Belongs to the ATPase alpha/beta chains family. F-type ATPases have 2 components, CF(1) - the catalytic core - and CF(0) - the membrane proton channel. CF(1) has five subunits: alpha(3), beta(3), gamma(1), delta(1), epsilon(1). CF(0) has three main subunits: a(1), b(2) and c(9-12). The alpha and beta chains form an alternating ring which encloses part of the gamma chain. CF(1) is attached to CF(0) by a central stalk formed by the gamma and epsilon chains, while a peripheral stalk is formed by the delta and b chains.

It is found in the cell membrane. It carries out the reaction ATP + H2O + 4 H(+)(in) = ADP + phosphate + 5 H(+)(out). In terms of biological role, produces ATP from ADP in the presence of a proton gradient across the membrane. The catalytic sites are hosted primarily by the beta subunits. In Stenotrophomonas maltophilia (strain K279a), this protein is ATP synthase subunit beta.